A 138-amino-acid chain; its full sequence is Endoribonuclease YbeY (138 aa).

Zn(2+) is bound by residues His105, His109, and Asp115.

It belongs to the endoribonuclease YbeY family. The cofactor is Zn(2+).

The protein localises to the cytoplasm. Single strand-specific metallo-endoribonuclease involved in late-stage 70S ribosome quality control and in maturation of the 3' terminus of the 16S rRNA. This is Endoribonuclease YbeY from Chlorobium phaeobacteroides (strain BS1).